Here is a 200-residue protein sequence, read N- to C-terminus: MSIKPPSALSELVEALRALPGVGPKSAQRIAYHLMQHDREGAERLGRSLLFATEHLRHCEKCNTFTEAQVCEVCSDPERDPALLCVVETPADQIMLEQTMTYRGLYFVLMGRLSPLDGIGPKEIHFDRLVRRASDGIVKEVVLATNFTNEGEATAHYLGQTLKARGLAVTRLARGVPVGGELEYVDAGTIARAMLDRRTL.

The C4-type zinc-finger motif lies at 59–74; sequence CEKCNTFTEAQVCEVC. In terms of domain architecture, Toprim spans 82 to 177; sequence ALLCVVETPA…AVTRLARGVP (96 aa).

It belongs to the RecR family.

Functionally, may play a role in DNA repair. It seems to be involved in an RecBC-independent recombinational process of DNA repair. It may act with RecF and RecO. This chain is Recombination protein RecR, found in Burkholderia pseudomallei (strain 1106a).